The following is a 52-amino-acid chain: Large ribosomal subunit protein bL32c (52 aa).

Belongs to the bacterial ribosomal protein bL32 family.

The protein resides in the plastid. The protein localises to the chloroplast. The polypeptide is Large ribosomal subunit protein bL32c (Capsella bursa-pastoris (Shepherd's purse)).